We begin with the raw amino-acid sequence, 20 residues long: DDIKLSQQYDVLDLFKYMHQ.

Belongs to the G-protein coupled receptor 1 family.

Its subcellular location is the cell membrane. Putative receptor for octopamine. Octopamine (OA) is a neurotransmitter, neurohormone, and neuromodulator in invertebrates. The activity of this receptor is mediated by G proteins which activate adenylyl cyclase. The polypeptide is Octopamine receptor (Photinus pyralis (Common eastern firefly)).